The sequence spans 216 residues: Uridine kinase (216 aa).

Residue 16–23 coordinates ATP; the sequence is GASASGKS.

The protein belongs to the uridine kinase family.

Its subcellular location is the cytoplasm. It carries out the reaction uridine + ATP = UMP + ADP + H(+). It catalyses the reaction cytidine + ATP = CMP + ADP + H(+). Its pathway is pyrimidine metabolism; CTP biosynthesis via salvage pathway; CTP from cytidine: step 1/3. It functions in the pathway pyrimidine metabolism; UMP biosynthesis via salvage pathway; UMP from uridine: step 1/1. In Pasteurella multocida (strain Pm70), this protein is Uridine kinase.